Consider the following 446-residue polypeptide: Mitochondrial distribution and morphology protein 12 (446 aa).

Positions 1–446 constitute an SMP-LTD domain; it reads MSIDINWEAA…VYPSFWTFLV (446 aa). Acidic residues predominate over residues 75-85; sequence DNEIGDGEVSD. 3 disordered regions span residues 75-106, 126-145, and 188-283; these read DNEI…SAAD, PHDV…PIRS, and TPLS…RVRE. The span at 126-138 shows a compositional bias: basic and acidic residues; that stretch reads PHDVPIPSKEDPL. Residues 233 to 246 are compositionally biased toward polar residues; that stretch reads TGNSRPSTADTLDS. Basic and acidic residues predominate over residues 260–274; that stretch reads SSDDAHPNVLPRRDN.

This sequence belongs to the MDM12 family. As to quaternary structure, component of the ER-mitochondria encounter structure (ERMES) or MDM complex, composed of MMM1, MDM10, MDM12 and MDM34. An MMM1 homodimer associates with one molecule of MDM12 on each side in a pairwise head-to-tail manner, and the SMP-LTD domains of MMM1 and MDM12 generate a continuous hydrophobic tunnel for phospholipid trafficking.

The protein resides in the mitochondrion outer membrane. It is found in the endoplasmic reticulum membrane. Component of the ERMES/MDM complex, which serves as a molecular tether to connect the endoplasmic reticulum (ER) and mitochondria. Components of this complex are involved in the control of mitochondrial shape and protein biogenesis, and function in nonvesicular lipid trafficking between the ER and mitochondria. MDM12 is required for the interaction of the ER-resident membrane protein MMM1 and the outer mitochondrial membrane-resident beta-barrel protein MDM10. The MDM12-MMM1 subcomplex functions in the major beta-barrel assembly pathway that is responsible for biogenesis of all mitochondrial outer membrane beta-barrel proteins, and acts in a late step after the SAM complex. The MDM10-MDM12-MMM1 subcomplex further acts in the TOM40-specific pathway after the action of the MDM12-MMM1 complex. Essential for establishing and maintaining the structure of mitochondria and maintenance of mtDNA nucleoids. The sequence is that of Mitochondrial distribution and morphology protein 12 from Coccidioides immitis (strain RS) (Valley fever fungus).